The primary structure comprises 1324 residues: Synaptojanin-1 (1324 aa).

The 324-residue stretch at 119-442 folds into the SAC domain; it reads VRKVLNSGNF…GDSISKIYAG (324 aa). The interval 475–859 is catalytic; sequence AIDVLLLGNT…GRAELKTSDH (385 aa). 2 positions are modified to phosphoserine: Ser-820 and Ser-830. In terms of domain architecture, RRM spans 902–971; it reads SSLPENNFFN…RTITITLKSP (70 aa). Residues 1030-1324 are disordered; sequence LQPSSSSALA…SDPFEDLSLN (295 aa). Positions 1080–1103 are enriched in polar residues; it reads ASQSSPVDTLPATQLQQKDSSQTL. Positions 1108–1130 are enriched in pro residues; sequence PPPPRPVAPPARPAPPQRPPPPS. Residues 1138-1156 show a composition bias toward basic and acidic residues; it reads ARERVWSTRKAQERPRRDN. An Omega-N-methylarginine modification is found at Arg-1186. Thr-1205 carries the phosphothreonine modification. Ser-1277 carries the post-translational modification Phosphoserine. Residues 1278-1292 are compositionally biased toward low complexity; it reads SHSLPSDAPAAAAGA.

The protein belongs to the synaptojanin family. This sequence in the central section; belongs to the inositol 1,4,5-trisphosphate 5-phosphatase family. In terms of assembly, interacts with ASH/GRB2. Interacts with PACSIN1, PACSIN2 and PACSIN3. Interacts with AMPH, SH3GL1, SH3GL2 and SH3GL3. Interacts with MYO1E (via SH3 domain). Interacts with BIN1 and DNM1. Interacts with EPS15. In terms of tissue distribution, ubiquitously expressed with highest levels in brain.

The protein localises to the cytoplasm. Its subcellular location is the perinuclear region. It catalyses the reaction a 1,2-diacyl-sn-glycero-3-phospho-(1D-myo-inositol-4,5-bisphosphate) + H2O = a 1,2-diacyl-sn-glycero-3-phospho-(1D-myo-inositol 4-phosphate) + phosphate. In terms of biological role, phosphatase that acts on various phosphoinositides, including phosphatidylinositol 4-phosphate, phosphatidylinositol (4,5)-bisphosphate and phosphatidylinositol (3,4,5)-trisphosphate. Has a role in clathrin-mediated endocytosis. Hydrolyzes PIP2 bound to actin regulatory proteins resulting in the rearrangement of actin filaments downstream of tyrosine kinase and ASH/GRB2. The polypeptide is Synaptojanin-1 (SYNJ1) (Bos taurus (Bovine)).